Reading from the N-terminus, the 291-residue chain is Aliphatic sulfonates import ATP-binding protein SsuB 2 (291 aa).

Positions 26–247 constitute an ABC transporter domain; the sequence is LRVRGIAKRY…APGLPALASI (222 aa). An ATP-binding site is contributed by 58–65; sequence GRSGCGKS. Positions 264 to 291 are disordered; it reads PAAPKAQTRHGPPRGATAQDTSPLQRIL. Residues 281 to 291 are compositionally biased toward polar residues; the sequence is AQDTSPLQRIL.

Belongs to the ABC transporter superfamily. Aliphatic sulfonates importer (TC 3.A.1.17.2) family. As to quaternary structure, the complex is composed of two ATP-binding proteins (SsuB), two transmembrane proteins (SsuC) and a solute-binding protein (SsuA).

The protein localises to the cell inner membrane. The enzyme catalyses ATP + H2O + aliphatic sulfonate-[sulfonate-binding protein]Side 1 = ADP + phosphate + aliphatic sulfonateSide 2 + [sulfonate-binding protein]Side 1.. In terms of biological role, part of the ABC transporter complex SsuABC involved in aliphatic sulfonates import. Responsible for energy coupling to the transport system. This Xanthomonas axonopodis pv. citri (strain 306) protein is Aliphatic sulfonates import ATP-binding protein SsuB 2.